Consider the following 450-residue polypeptide: MAKHDRGLRFQPAGGSRAPQIPVGKKQRLTIQRLANDGRGIAFVEGRTWFVSGALAGEEVEARVLGSHGKVVEARAERIFNASDLRRPAACAHAGRCGGCSVQHLPHDEQLALKQRMLAEQLSKVAGVEPEAWAAPLSGPEFGYRRRARVAVRWDAKGKQLEVGFRAAGSQDIVAIDDCPVLVQALQPVMNRLPAMLRRLSKPQALGHVELFSGSALAVLLRHMAPLSDSDLTILKDFCDFHQAQLWLHGEGEPQPFDPSQALGYRLETWDLHLAYRPGDFVQVNAGVNEAMVAQALEWLAPQADERVLDLFCGLGNFALPLARQVREVVAVEGVATMVARAAENAASNNLHNTRFFQADLSQPLSAAEWADEGFSAVLLDPPRDGAFEVVRQLATLGAKRLVYVSCNPATLARDTVELIKQGYRLKRAGILDMFPQTAHVEAMALFEAS.

The tract at residues 1 to 22 is disordered; it reads MAKHDRGLRFQPAGGSRAPQIP. The TRAM domain occupies 20–78; that stretch reads QIPVGKKQRLTIQRLANDGRGIAFVEGRTWFVSGALAGEEVEARVLGSHGKVVEARAER. Residues cysteine 91, cysteine 97, cysteine 100, and cysteine 179 each coordinate [4Fe-4S] cluster. Glutamine 283, phenylalanine 312, asparagine 317, glutamate 333, aspartate 360, and aspartate 381 together coordinate S-adenosyl-L-methionine. Cysteine 407 functions as the Nucleophile in the catalytic mechanism.

This sequence belongs to the class I-like SAM-binding methyltransferase superfamily. RNA M5U methyltransferase family. RlmD subfamily.

It catalyses the reaction uridine(1939) in 23S rRNA + S-adenosyl-L-methionine = 5-methyluridine(1939) in 23S rRNA + S-adenosyl-L-homocysteine + H(+). Its function is as follows. Catalyzes the formation of 5-methyl-uridine at position 1939 (m5U1939) in 23S rRNA. This chain is 23S rRNA (uracil(1939)-C(5))-methyltransferase RlmD, found in Pseudomonas fluorescens (strain ATCC BAA-477 / NRRL B-23932 / Pf-5).